The following is a 324-amino-acid chain: D-alanine--D-alanine ligase (324 aa).

The ATP-grasp domain occupies 121–321; the sequence is NQYLKGFGIR…IKDVMTDIIE (201 aa). Position 149 to 204 (149 to 204) interacts with ATP; it reads INKIGLPCFIKPNAGGSSFGVTKVKTKEDIQPAIEKAFEESDEVMIEAFMKGTEIT. Mg(2+)-binding residues include Asp275, Glu288, and Asn290.

It belongs to the D-alanine--D-alanine ligase family. Requires Mg(2+) as cofactor. Mn(2+) is required as a cofactor.

It is found in the cytoplasm. It carries out the reaction 2 D-alanine + ATP = D-alanyl-D-alanine + ADP + phosphate + H(+). Its pathway is cell wall biogenesis; peptidoglycan biosynthesis. Functionally, cell wall formation. This Phocaeicola vulgatus (strain ATCC 8482 / DSM 1447 / JCM 5826 / CCUG 4940 / NBRC 14291 / NCTC 11154) (Bacteroides vulgatus) protein is D-alanine--D-alanine ligase.